The following is a 197-amino-acid chain: Holliday junction branch migration complex subunit RuvA (197 aa).

The domain I stretch occupies residues methionine 1–arginine 63. The tract at residues serine 64–valine 142 is domain II. The interval alanine 143–serine 147 is flexible linker. A domain III region spans residues alanine 148–lysine 197.

It belongs to the RuvA family. In terms of assembly, homotetramer. Forms an RuvA(8)-RuvB(12)-Holliday junction (HJ) complex. HJ DNA is sandwiched between 2 RuvA tetramers; dsDNA enters through RuvA and exits via RuvB. An RuvB hexamer assembles on each DNA strand where it exits the tetramer. Each RuvB hexamer is contacted by two RuvA subunits (via domain III) on 2 adjacent RuvB subunits; this complex drives branch migration. In the full resolvosome a probable DNA-RuvA(4)-RuvB(12)-RuvC(2) complex forms which resolves the HJ.

The protein localises to the cytoplasm. The RuvA-RuvB-RuvC complex processes Holliday junction (HJ) DNA during genetic recombination and DNA repair, while the RuvA-RuvB complex plays an important role in the rescue of blocked DNA replication forks via replication fork reversal (RFR). RuvA specifically binds to HJ cruciform DNA, conferring on it an open structure. The RuvB hexamer acts as an ATP-dependent pump, pulling dsDNA into and through the RuvAB complex. HJ branch migration allows RuvC to scan DNA until it finds its consensus sequence, where it cleaves and resolves the cruciform DNA. The protein is Holliday junction branch migration complex subunit RuvA of Streptococcus pneumoniae serotype 2 (strain D39 / NCTC 7466).